The following is a 2212-amino-acid chain: MARFGDEMPGRYGAGGGGSGPAAGVVVGAAGGRGAGGSRQGGQPGAQRMYKQSMAQRARTMALYNPIPVRQNCLTVNRSLFLFSEDNVVRKYAKKITEWPPFEYMILATIIANCIVLALEQHLPDDDKTPMSERLDDTEPYFIGIFCFEAGIKIVALGFAFHKGSYLRNGWNVMDFVVVLTGILATVGTEFDLRTLRAVRVLRPLKLVSGIPSLQVVLKSIMKAMIPLLQIGLLLFFAILIFAIIGLEFYMGKFHTTCFEEGTDDIQGESPAPCGTEEPARTCPNGTKCQPYWEGPNNGITQFDNILFAVLTVFQCITMEGWTDLLYNSNDASGNTWNWLYFIPLIIIGSFFMLNLVLGVLSGEFAKERERVENRRAFLKLRRQQQIERELNGYMEWISKAEEVILAEDETDVEQRHPFDGALRRATLKKSKTDLLNPEEAEDQLADIASVGSPFARASIKSAKLENSTFFHKKERRMRFYIRRMVKTQAFYWTVLSLVALNTLWLAIVHYNQPEWLSDFLYYAEFIFLGLFMSEMFIKMYGLGTRPYFHSSFNCFDCGVIIGSIFEVIWAVIKPGTSFGISVLRALRLLRIFKVTKYWASLRNLVVSLLNSMKSIISLLFLLFLFIVVFALLGMQLFGGQFNFDEGTPPTNFDTFPAAIMTVFQILTGEDWNEVMYDEIKSQGGVQGGMVFSIYFIVLTLFGNYTLLNVFLAIAVDNLANAQELTKDEQEEEEAANQKLALQKAKEVAEVSPLSAANMSIAVKEQQKNQKPAKSVWEQRTSEMRKQNLLASREALYGDAAERWPTTYARPLRPDVKTHLDRPLVVDPQENRNNNTNKSRAPEALRQTARPRESARDPDARRAWPSSPERAPGREGPYGRESEPQQREHAPPREHVPWDADPERAKAGDAPRRHTHRPVAEGEPRRHRARRRPGDEPDDRPERRPRPRDATRPARAADGEGDDGERKRRHRHGPPAHDDRERRHRRRKESQGSGVPMSGPNLSTTRPIQQDLGRQDLPLAEDLDNMKNNKLATGEPASPHDSLGHSGLPPSPAKIGNSTNPGPALATNPQNAASRRTPNNPGNPSNPGPPKTPENSLIVTNPSSTQPNSAKTARKPEHMAVEIPPACPPLNHTVVQVNKNANPDPLPKKEEEKKEEEEADPGEDGPKPMPPYSSMFILSTTNPLRRLCHYILNLRYFEMCILMVIAMSSIALAAEDPVQPNAPRNNVLRYFDYVFTGVFTFEMVIKMIDLGLVLHQGAYFRDLWNILDFIVVSGALVAFAFTGNSKGKDINTIKSLRVLRVLRPLKTIKRLPKLKAVFDCVVNSLKNVFNILIVYMLFMFIFAVVAVQLFKGKFFHCTDESKEFERDCRGKYLLYEKNEVKARDREWKKYDFHYDNVLWALLTLFTVSTGEGWPQVLKHSVDATFENQGPSPGYRMEMSIFYVVYFVVFPFFFVNIFVALIIITFQEQGDKMMEEYSLEKNERACIDFAISAKPLTRHMPQNKQSFQYRMWQFVVSPPFEYTIMAMIALNTIVLMMKFYGASVAYENALRVFNIVFTSLFSLECVLKVMAFGILNYFRDAWNIFDFVTVLGSITDILVTEFGNNFINLSFLRLFRAARLIKLLRQGYTIRILLWTFVQSFKALPYVCLLIAMLFFIYAIIGMQVFGNIGIDGEDEDSDEDEFQITEHNNFRTFFQALMLLFRSATGEAWHNIMLSCLSGKPCDKNSGIQKPECGNEFAYFYFVSFIFLCSFLMLNLFVAVIMDNFEYLTRDSSILGPHHLDEYVRVWAEYDPAACGRIHYKDMYSLLRVISPPLGLGKKCPHRVACKRLLRMDLPVADDNTVHFNSTLMALIRTALDIKIAKGGADKQQMDAELRKEMMAIWPNLSQKTLDLLVTPHKSTDLTVGKIYAAMMIMEYYRQSKAKKLQAMREEQNRTPLMFQRMEPPSPTQEGGPSQNALPSTQLDPGGGLMAQESSMKESPSWVTQRAQEMFQKTGTWSPERGPPIDMPNSQPNSQSVEMREMGTDGYSDSEHYLPMEGQTRAASMPRLPAENQRRRGRPRGNNLSTISDTSPMKRSASVLGPKARRLDDYSLERVPPEENQRYHQRRRDRGHRTSERSLGRYTDVDTGLGTDLSMTTQSGDLPSKDRDQDRGRPKDRKHRPHHHHHHHHHHPPAPDRERYAQERPDTGRARAREQRWSRSPSEGREHATHRQ.

Residues 1-100 (MARFGDEMPG…KYAKKITEWP (100 aa)) lie on the Cytoplasmic side of the membrane. The I repeat unit spans residues 87–365 (NVVRKYAKKI…LVLGVLSGEF (279 aa)). Residues 101–119 (PFEYMILATIIANCIVLAL) form a helical membrane-spanning segment. The Extracellular portion of the chain corresponds to 120-138 (EQHLPDDDKTPMSERLDDT). The chain crosses the membrane as a helical span at residues 139–156 (EPYFIGIFCFEAGIKIVA). At 157-168 (LGFAFHKGSYLR) the chain is on the cytoplasmic side. A helical membrane pass occupies residues 169-184 (NGWNVMDFVVVLTGIL). Residues 185-192 (ATVGTEFD) are Extracellular-facing. The helical transmembrane segment at 193-211 (LRTLRAVRVLRPLKLVSGI) threads the bilayer. The Cytoplasmic segment spans residues 212–230 (PSLQVVLKSIMKAMIPLLQ). The chain crosses the membrane as a helical span at residues 231 to 250 (IGLLLFFAILIFAIIGLEFY). The Extracellular portion of the chain corresponds to 251-337 (MGKFHTTCFE…NSNDASGNTW (87 aa)). N-linked (GlcNAc...) asparagine glycosylation occurs at Asn285. A Ca(2+)-binding site is contributed by Glu320. Residues 338–362 (NWLYFIPLIIIGSFFMLNLVLGVLS) traverse the membrane as a helical segment. At 363–489 (GEFAKERERV…FYIRRMVKTQ (127 aa)) the chain is on the cytoplasmic side. Residues 385–402 (QQIERELNGYMEWISKAE) form a binding to the beta subunit region. Thr411 is modified (phosphothreonine). Residues Ser450 and Ser453 each carry the phosphoserine modification. One copy of the II repeat lies at 475-719 (ERRMRFYIRR…VFLAIAVDNL (245 aa)). The chain crosses the membrane as a helical span at residues 490–509 (AFYWTVLSLVALNTLWLAIV). Residues 510–523 (HYNQPEWLSDFLYY) lie on the Extracellular side of the membrane. Residues 524–543 (AEFIFLGLFMSEMFIKMYGL) form a helical membrane-spanning segment. Residues 544–551 (GTRPYFHS) lie on the Cytoplasmic side of the membrane. Residues 552–570 (SFNCFDCGVIIGSIFEVIW) form a helical membrane-spanning segment. Topologically, residues 571–580 (AVIKPGTSFG) are extracellular. A helical membrane pass occupies residues 581–599 (ISVLRALRLLRIFKVTKYW). Topologically, residues 600-618 (ASLRNLVVSLLNSMKSIIS) are cytoplasmic. A helical membrane pass occupies residues 619 to 638 (LLFLLFLFIVVFALLGMQLF). At 639–691 (GGQFNFDEGTPPTNFDTFPAAIMTVFQILTGEDWNEVMYDEIKSQGGVQGGMV) the chain is on the extracellular side. Glu670 serves as a coordination point for Ca(2+). Residues 692–716 (FSIYFIVLTLFGNYTLLNVFLAIAV) traverse the membrane as a helical segment. The Cytoplasmic portion of the chain corresponds to 717–1190 (DNLANAQELT…TNPLRRLCHY (474 aa)). A phosphoserine mark is found at Ser752, Ser755, and Ser792. Basic and acidic residues-rich tracts occupy residues 814–824 (PDVKTHLDRPL), 850–862 (RPRE…DARR), 871–924 (APGR…EGEP), and 932–958 (RPGD…RAAD). 2 disordered regions span residues 814-1117 (PDVK…RKPE) and 1137-1170 (VNKN…KPMP). 3 positions are modified to phosphoserine: Ser1038, Ser1042, and Ser1051. Residues 1056–1073 (GNSTNPGPALATNPQNAA) are compositionally biased toward polar residues. A compositionally biased stretch (low complexity) spans 1074–1083 (SRRTPNNPGN). The span at 1094–1111 (ENSLIVTNPSSTQPNSAK) shows a compositional bias: polar residues. Residues 1153–1163 (KKEEEEADPGE) show a composition bias toward acidic residues. The III repeat unit spans residues 1182–1465 (NPLRRLCHYI…IFVALIIITF (284 aa)). Residues 1191 to 1214 (ILNLRYFEMCILMVIAMSSIALAA) form a helical membrane-spanning segment. Over 1215–1231 (EDPVQPNAPRNNVLRYF) the chain is Extracellular. A helical transmembrane segment spans residues 1232–1251 (DYVFTGVFTFEMVIKMIDLG). The Cytoplasmic portion of the chain corresponds to 1252 to 1258 (LVLHQGA). A helical membrane pass occupies residues 1259-1282 (YFRDLWNILDFIVVSGALVAFAFT). At 1283–1293 (GNSKGKDINTI) the chain is on the extracellular side. Residues 1294 to 1311 (KSLRVLRVLRPLKTIKRL) form a helical membrane-spanning segment. The Cytoplasmic segment spans residues 1312-1330 (PKLKAVFDCVVNSLKNVFN). A helical transmembrane segment spans residues 1331-1350 (ILIVYMLFMFIFAVVAVQLF). At 1351 to 1437 (KGKFFHCTDE…QGPSPGYRME (87 aa)) the chain is on the extracellular side. Residue Glu1411 coordinates Ca(2+). A helical membrane pass occupies residues 1438-1462 (MSIFYVVYFVVFPFFFVNIFVALII). Over 1463–1518 (ITFQEQGDKMMEEYSLEKNERACIDFAISAKPLTRHMPQNKQSFQYRMWQFVVSPP) the chain is Cytoplasmic. An IV repeat occupies 1502-1765 (NKQSFQYRMW…LFVAVIMDNF (264 aa)). Residues 1519–1537 (FEYTIMAMIALNTIVLMMK) form a helical membrane-spanning segment. Residues 1538-1551 (FYGASVAYENALRV) are Extracellular-facing. A helical membrane pass occupies residues 1552-1573 (FNIVFTSLFSLECVLKVMAFGI). Residues 1574-1580 (LNYFRDA) lie on the Cytoplasmic side of the membrane. Residues 1581 to 1600 (WNIFDFVTVLGSITDILVTE) traverse the membrane as a helical segment. Residues 1601-1607 (FGNNFIN) are Extracellular-facing. Residue Asn1607 is glycosylated (N-linked (GlcNAc...) asparagine). Residues 1608–1626 (LSFLRLFRAARLIKLLRQG) form a helical membrane-spanning segment. Topologically, residues 1627–1645 (YTIRILLWTFVQSFKALPY) are cytoplasmic. Residues 1646–1665 (VCLLIAMLFFIYAIIGMQVF) form a helical membrane-spanning segment. Topologically, residues 1666–1737 (GNIGIDGEDE…IQKPECGNEF (72 aa)) are extracellular. The helical transmembrane segment at 1738 to 1763 (AYFYFVSFIFLCSFLMLNLFVAVIMD) threads the bilayer. The Cytoplasmic portion of the chain corresponds to 1764 to 2212 (NFEYLTRDSS…EGREHATHRQ (449 aa)). Thr1935 is subject to Phosphothreonine. Residues 1940-2212 (QRMEPPSPTQ…EGREHATHRQ (273 aa)) are disordered. Polar residues-rich tracts occupy residues 1948–1963 (TQEG…STQL) and 1972–1997 (QESS…TGTW). Residues Ser1998, Ser2016, Ser2028, Ser2030, Ser2071, and Ser2091 each carry the phosphoserine modification. Residues 2008-2017 (PNSQPNSQSV) are compositionally biased toward polar residues. A compositionally biased stretch (basic and acidic residues) spans 2018–2034 (EMREMGTDGYSDSEHYL). Over residues 2064 to 2073 (LSTISDTSPM) the composition is skewed to polar residues. 2 stretches are compositionally biased toward basic and acidic residues: residues 2085–2102 (RRLD…ENQR) and 2143–2153 (PSKDRDQDRGR). Residues 2154–2172 (PKDRKHRPHHHHHHHHHHP) are compositionally biased toward basic residues. Positions 2173-2212 (PAPDRERYAQERPDTGRARAREQRWSRSPSEGREHATHRQ) are enriched in basic and acidic residues.

Belongs to the calcium channel alpha-1 subunit (TC 1.A.1.11) family. CACNA1A subfamily. In terms of assembly, voltage-dependent calcium channels are multisubunit complexes, consisting of alpha-1, alpha-2, beta and delta subunits in a 1:1:1:1 ratio. The channel activity is directed by the pore-forming and voltage-sensitive alpha-1 subunit. In many cases, this subunit is sufficient to generate voltage-sensitive calcium channel activity. The auxiliary subunits beta and alpha-2/delta linked by a disulfide bridge regulate the channel activity. Interacts (via C-terminal CDB motif) with CABP1 in the pre- and postsynaptic membranes. Interacts with the spider omega-agatoxin-IVA (AC P30288). Interacts with TSPOAP1. As to expression, brain specific. Purkinje cells contain predominantly P-type VSCC, the Q-type being a prominent calcium current in cerebellar granule cells. Also found in heart, in kidney distal convoluted tubule (DCT), and in pituitary.

The protein localises to the cell membrane. The enzyme catalyses Ca(2+)(in) = Ca(2+)(out). In terms of biological role, voltage-sensitive calcium channels (VSCC) mediate the entry of calcium ions into excitable cells and are also involved in a variety of calcium-dependent processes, including muscle contraction, hormone or neurotransmitter release, gene expression, cell motility, cell division and cell death. The isoform alpha-1A gives rise to P and/or Q-type calcium currents. P/Q-type calcium channels belong to the 'high-voltage activated' (HVA) group and are specifically blocked by the spider omega-agatoxin-IVA (AC P30288). They are however insensitive to dihydropyridines (DHP). The chain is Voltage-dependent P/Q-type calcium channel subunit alpha-1A from Rattus norvegicus (Rat).